Here is a 739-residue protein sequence, read N- to C-terminus: BEL1-like homeodomain protein 2 (739 aa).

Disordered regions lie at residues 23-73 (SQDY…ESSV) and 143-222 (LMNP…NSQT). A compositionally biased stretch (polar residues) spans 41 to 58 (NFSNGFDRSDSPNLTTQQ). Residues 145–155 (NPPPPQQPPSP) show a composition bias toward pro residues. Over residues 179–190 (TNTTHHQNYTNH) the composition is skewed to low complexity. An SR/KY domain region spans residues 316 to 332 (SRYTTAAQELLEEFCSV). The disordered stretch occupies residues 341 to 378 (KLGNSSNPNTCGGDGGGSSPSSAGANKEHPPLSASDRI). The interval 376 to 447 (DRIEHQRRKV…CLKDAVAAQL (72 aa)) is BELL domain. A DNA-binding region (homeobox) is located at residues 498–560 (AWRPQRGLPE…NARVRLWKPM (63 aa)). Residues 567 to 627 (QESKEREREE…TAPDASDADA (61 aa)) form a disordered region. Over residues 576–585 (EELEENEEDQ) the composition is skewed to acidic residues. A compositionally biased stretch (basic and acidic residues) spans 586-596 (ETKNSNDDKST). Positions 597-627 (KSNNNESNFTAVRTTSQTPTTTAPDASDADA) are enriched in low complexity.

Belongs to the TALE/BELL homeobox family. In terms of assembly, may form heterodimeric complexes with TALE/KNOX proteins STM, KNAT1/BP, KNAT2 and KNAT5. Interacts with OFP1, OFP2, OFP4 and OFP5. Interacts with KNATM, isoform KNATM-B. As to expression, expressed in lateral organs.

It is found in the nucleus. Its function is as follows. Transcription factor that establishes leaf shape by repressing growth in specific subdomains of the leaf. Negatively regulates knox homeobox gene KNAT1/BP expression. This is BEL1-like homeodomain protein 2 (BLH2) from Arabidopsis thaliana (Mouse-ear cress).